The primary structure comprises 204 residues: Probable peptidyl-tRNA hydrolase (204 aa).

Residue histidine 36 is the Proton acceptor of the active site. TRNA-binding residues include asparagine 86 and asparagine 132.

It belongs to the PTH family.

The catalysed reaction is an N-acyl-L-alpha-aminoacyl-tRNA + H2O = an N-acyl-L-amino acid + a tRNA + H(+). Its function is as follows. Peptidyl-tRNA hydrolase that cleaves nascent chains-tRNAs that are not stably fixed in the P-site of 60S ribosome-nascent chain complexes. Acts downstream of the ribosome-associated quality control (RQC) pathway to release non-ubiquitinated nascent chains from 60S and 80S ribosome-nascent chain complexes. Does not act on ubiquitinated nascent chains, which are cleaved by ANKZF1 for degradation. This is Probable peptidyl-tRNA hydrolase from Mus musculus (Mouse).